Reading from the N-terminus, the 351-residue chain is Biotin synthase (351 aa).

A Radical SAM core domain is found at asparagine 48 to aspartate 265. Residues cysteine 63, cysteine 67, and cysteine 70 each coordinate [4Fe-4S] cluster. Residues cysteine 107, cysteine 139, cysteine 199, and arginine 269 each contribute to the [2Fe-2S] cluster site.

It belongs to the radical SAM superfamily. Biotin synthase family. Homodimer. Requires [4Fe-4S] cluster as cofactor. It depends on [2Fe-2S] cluster as a cofactor.

It carries out the reaction (4R,5S)-dethiobiotin + (sulfur carrier)-SH + 2 reduced [2Fe-2S]-[ferredoxin] + 2 S-adenosyl-L-methionine = (sulfur carrier)-H + biotin + 2 5'-deoxyadenosine + 2 L-methionine + 2 oxidized [2Fe-2S]-[ferredoxin]. The protein operates within cofactor biosynthesis; biotin biosynthesis; biotin from 7,8-diaminononanoate: step 2/2. Its function is as follows. Catalyzes the conversion of dethiobiotin (DTB) to biotin by the insertion of a sulfur atom into dethiobiotin via a radical-based mechanism. This Leptospira interrogans serogroup Icterohaemorrhagiae serovar copenhageni (strain Fiocruz L1-130) protein is Biotin synthase.